We begin with the raw amino-acid sequence, 409 residues long: Peptidase T (409 aa).

Residue His78 coordinates Zn(2+). Asp80 is a catalytic residue. Position 140 (Asp140) interacts with Zn(2+). The active-site Proton acceptor is the Glu173. Zn(2+)-binding residues include Glu174, Asp196, and His379.

This sequence belongs to the peptidase M20B family. Zn(2+) is required as a cofactor.

The protein localises to the cytoplasm. The enzyme catalyses Release of the N-terminal residue from a tripeptide.. Cleaves the N-terminal amino acid of tripeptides. This Salmonella paratyphi C (strain RKS4594) protein is Peptidase T.